Reading from the N-terminus, the 177-residue chain is Large ribosomal subunit protein uL6 (177 aa).

It belongs to the universal ribosomal protein uL6 family. In terms of assembly, part of the 50S ribosomal subunit.

Its function is as follows. This protein binds to the 23S rRNA, and is important in its secondary structure. It is located near the subunit interface in the base of the L7/L12 stalk, and near the tRNA binding site of the peptidyltransferase center. The sequence is that of Large ribosomal subunit protein uL6 from Acinetobacter baumannii (strain AB307-0294).